The following is a 359-amino-acid chain: DNA-directed RNA polymerase RPB3-11 homolog (359 aa).

This sequence in the N-terminal section; belongs to the archaeal RpoD/eukaryotic RPB3 RNA polymerase subunit family. In the C-terminal section; belongs to the archaeal RpoL/eukaryotic RPB11/RPC19 RNA polymerase subunit family. In terms of assembly, part of the viral DNA-directed RNA polymerase that consists of 8 polII-like subunits (RPB1, RPB2, RPB3, RPB5, RPB6, RPB7, RPB9, RPB10), a capping enzyme and a termination factor.

The protein resides in the host cytoplasm. It localises to the virion. Its function is as follows. Component of the DNA-directed RNA polymerase (RNAP) that catalyzes the transcription in the cytoplasm of viral DNA into RNA using the four ribonucleoside triphosphates as substrates. The polypeptide is DNA-directed RNA polymerase RPB3-11 homolog (Ornithodoros (relapsing fever ticks)).